Reading from the N-terminus, the 283-residue chain is NAD kinase (283 aa).

Asp-67 serves as the catalytic Proton acceptor. NAD(+) contacts are provided by residues 67-68 (DG), Arg-72, 136-137 (NE), Lys-147, Arg-164, Asp-166, 177-182 (TAYSMS), and Gln-236.

Belongs to the NAD kinase family. A divalent metal cation serves as cofactor.

The protein localises to the cytoplasm. It catalyses the reaction NAD(+) + ATP = ADP + NADP(+) + H(+). In terms of biological role, involved in the regulation of the intracellular balance of NAD and NADP, and is a key enzyme in the biosynthesis of NADP. Catalyzes specifically the phosphorylation on 2'-hydroxyl of the adenosine moiety of NAD to yield NADP. This is NAD kinase from Methanothermobacter thermautotrophicus (strain ATCC 29096 / DSM 1053 / JCM 10044 / NBRC 100330 / Delta H) (Methanobacterium thermoautotrophicum).